Consider the following 344-residue polypeptide: L-rhamnose-proton symporter (344 aa).

10 helical membrane passes run 4–24 (AITM…CFYA), 38–58 (WSVG…ATLL), 68–88 (FSAS…IGNI), 101–121 (MGIG…TPII), 131–151 (TQGG…VGIV), 175–195 (LLLA…MNAA), 214–234 (LPSY…FCFI), 259–279 (LLLS…YAWG), 290–310 (MSWM…GLVL), and 323–343 (VLSL…LGMA).

This sequence belongs to the L-rhamnose transporter (TC 2.A.7.6) family.

The protein resides in the cell inner membrane. The enzyme catalyses L-rhamnopyranose(in) + H(+)(in) = L-rhamnopyranose(out) + H(+)(out). Functionally, uptake of L-rhamnose across the cytoplasmic membrane with the concomitant transport of protons into the cell (symport system). In Klebsiella pneumoniae subsp. pneumoniae (strain ATCC 700721 / MGH 78578), this protein is L-rhamnose-proton symporter.